The primary structure comprises 445 residues: Proline--tRNA ligase (445 aa).

This sequence belongs to the class-II aminoacyl-tRNA synthetase family. ProS type 2 subfamily. As to quaternary structure, homodimer.

It is found in the cytoplasm. It catalyses the reaction tRNA(Pro) + L-proline + ATP = L-prolyl-tRNA(Pro) + AMP + diphosphate. Its function is as follows. Catalyzes the attachment of proline to tRNA(Pro) in a two-step reaction: proline is first activated by ATP to form Pro-AMP and then transferred to the acceptor end of tRNA(Pro). The sequence is that of Proline--tRNA ligase from Cereibacter sphaeroides (strain ATCC 17023 / DSM 158 / JCM 6121 / CCUG 31486 / LMG 2827 / NBRC 12203 / NCIMB 8253 / ATH 2.4.1.) (Rhodobacter sphaeroides).